The following is a 417-amino-acid chain: NADH-quinone oxidoreductase subunit D (417 aa).

It belongs to the complex I 49 kDa subunit family. In terms of assembly, NDH-1 is composed of 14 different subunits. Subunits NuoB, C, D, E, F, and G constitute the peripheral sector of the complex.

It localises to the cell inner membrane. It carries out the reaction a quinone + NADH + 5 H(+)(in) = a quinol + NAD(+) + 4 H(+)(out). Functionally, NDH-1 shuttles electrons from NADH, via FMN and iron-sulfur (Fe-S) centers, to quinones in the respiratory chain. The immediate electron acceptor for the enzyme in this species is believed to be ubiquinone. Couples the redox reaction to proton translocation (for every two electrons transferred, four hydrogen ions are translocated across the cytoplasmic membrane), and thus conserves the redox energy in a proton gradient. The chain is NADH-quinone oxidoreductase subunit D from Burkholderia ambifaria (strain ATCC BAA-244 / DSM 16087 / CCUG 44356 / LMG 19182 / AMMD) (Burkholderia cepacia (strain AMMD)).